Reading from the N-terminus, the 65-residue chain is Crotamine CRO1 (65 aa).

The first 22 residues, Met1–Ala22, serve as a signal peptide directing secretion. Intrachain disulfides connect Cys26–Cys58, Cys33–Cys52, and Cys40–Cys59.

It belongs to the crotamine-myotoxin family. In terms of assembly, monomer. In terms of tissue distribution, expressed by the venom gland.

The protein localises to the secreted. Its function is as follows. Cationic peptide that possesses multiple functions. It acts as a cell-penetrating peptide (CPP), and as a potent voltage-gated potassium channel (Kv) inhibitor. It exhibits antimicrobial activities, hind limb paralysis, and severe muscle necrosis by a non-enzymatic mechanism. The chain is Crotamine CRO1 (CRO1) from Crotalus durissus terrificus (South American rattlesnake).